Reading from the N-terminus, the 219-residue chain is Inner membrane protein YghB (219 aa).

Residues 1–17 lie on the Cytoplasmic side of the membrane; sequence MAVIQDIIAALWQHDFA. The chain crosses the membrane as a helical span at residues 18-38; sequence ALADPHIVSVVYFVMFATLFL. The Periplasmic portion of the chain corresponds to 39–67; it reads ENGLLPASFLPGDSLLILAGALIAQGVMD. Residues 68–88 form a helical membrane-spanning segment; it reads FLPTIAILTAAASLGCWLSYI. The Cytoplasmic portion of the chain corresponds to 89–160; the sequence is QGRWLGNTKT…RRFQFFNWLS (72 aa). The chain crosses the membrane as a helical span at residues 161 to 181; that stretch reads GLLWVSVVTSFGYALSMIPFV. Residues 182-191 lie on the Periplasmic side of the membrane; it reads KRHEDQVMTF. The chain crosses the membrane as a helical span at residues 192–212; the sequence is LMILPIALLTAGLLGTLFVVI. The Cytoplasmic segment spans residues 213-219; that stretch reads KKKYCNA.

Belongs to the DedA family.

The protein localises to the cell inner membrane. In Escherichia coli O6:H1 (strain CFT073 / ATCC 700928 / UPEC), this protein is Inner membrane protein YghB (yghB).